The chain runs to 238 residues: Large ribosomal subunit protein uL5c (238 aa).

It belongs to the universal ribosomal protein uL5 family. In terms of assembly, part of the 50S ribosomal subunit; contacts the 5S rRNA.

The protein localises to the plastid. The protein resides in the chloroplast. Functionally, binds 5S rRNA, forms part of the central protuberance of the 50S subunit. The sequence is that of Large ribosomal subunit protein uL5c (rpl5) from Thalassiosira pseudonana (Marine diatom).